The sequence spans 593 residues: Double-stranded RNA-binding protein 2 (593 aa).

2 consecutive DRBM domains span residues 1-70 (MYKN…ELSK) and 87-155 (IYKN…ELKQ). Polar residues predominate over residues 188–197 (LNQTNGGKTP). Disordered regions lie at residues 188-221 (LNQT…KSNA), 357-408 (APDF…ESNQ), and 546-593 (VNSS…KLHI). The segment covering 205 to 219 (SSNRPSSRRPSYPKS) has biased composition (low complexity). A compositionally biased stretch (polar residues) spans 378-408 (ESSPASEQESKSHTASSSATRSPSQQLESNQ). Positions 572–586 (RTNTSDTSNAATASS) are enriched in low complexity.

Its function is as follows. Binds double-stranded RNA. This chain is Double-stranded RNA-binding protein 2 (DRB2), found in Oryza sativa subsp. japonica (Rice).